Consider the following 74-residue polypeptide: MKLTCVLIITVLFLTACQLTTAVTYSRGEHKHRALMSTGTNYRLLKTCRGSGRYCRSPYDCRRRYCRRISDACV.

An N-terminal signal peptide occupies residues 1-22 (MKLTCVLIITVLFLTACQLTTA). Residues 23-33 (VTYSRGEHKHR) constitute a propeptide that is removed on maturation.

The protein belongs to the conotoxin O1 superfamily. As to quaternary structure, homodimer; disulfide-linked. Post-translationally, may contain 2 intrachain disulfide bonds and probably one interchain disulfide bond forming the homodimer. The disulfide pairing is not important for activity towards the different nAChR subtypes, since this peptide without disulfide bond or with different disulfide bonds shows the same activity. Expressed by the venom duct.

The protein resides in the secreted. In terms of biological role, the activity of this natural homodimer has not been tested due to low abundance. The synthetic linear peptide has been refolded, giving 4 different monomeric isomers (m1 to m4) with 2 disulfide bonds each. All isomers potently inhibit rat alpha-1-beta-1-delta-epsilon/CHRNA1-CHRNB1-CHRND-CHRNE and human alpha-9-alpha-10/CHRNA9-CHRNA10 nicotinic acetylcholine receptors (nAChR). In addition, they show a modest inhibition at human alpha-3-beta-2/CHRNA3-CHRNB2, alpha-3-beta-4/CHRNA3-CHRNB4, alpha-7/CHRNA7, and alpha-4-beta-4/CHRNA4-CHRNB4. The synthetic monomer peptide without disulfide bonds shows a potent activity on alpha-9-alpha-10/CHRNA9 and CHRNA10 (IC(50)=16.2 nM). This linear peptide does not act as a competitive antagonist, or as a channel pore blocker of nAChR. The chain is O-conotoxin GeXXXIA from Conus generalis (General cone).